The following is a 309-amino-acid chain: Gamma-hemolysin component A (309 aa).

The signal sequence occupies residues 1–29; that stretch reads MIKNKILTATLAVGLIAPLANPFIEISKA.

Belongs to the aerolysin family. As to quaternary structure, toxicity requires sequential binding and synergistic association of a class S and a class F component which form heterooligomeric complexes. HlgA (class S) associates with HlgB (class F) thus forming an AB toxin in strains producing both gamma-hemolysins and leukocidins. HlgA and LukF-PV can also form a complex.

The protein resides in the secreted. In terms of biological role, toxin that seems to act by forming pores in the membrane of the cell. Has a hemolytic and a leucotoxic activity. The sequence is that of Gamma-hemolysin component A (hlgA) from Staphylococcus aureus (strain COL).